The following is a 100-amino-acid chain: Nucleoid-associated protein MYPU_0500 (100 aa).

This sequence belongs to the YbaB/EbfC family. As to quaternary structure, homodimer.

It is found in the cytoplasm. It localises to the nucleoid. Functionally, binds to DNA and alters its conformation. May be involved in regulation of gene expression, nucleoid organization and DNA protection. This Mycoplasmopsis pulmonis (strain UAB CTIP) (Mycoplasma pulmonis) protein is Nucleoid-associated protein MYPU_0500.